The sequence spans 230 residues: Octanoyltransferase (230 aa).

The BPL/LPL catalytic domain occupies 38–215; sequence AGGADTLLLL…AVCAALDGVL (178 aa). Substrate is bound by residues 76–83, 145–147, and 158–160; these read RGGKITWH, AIG, and GFA. The Acyl-thioester intermediate role is filled by Cys-176.

This sequence belongs to the LipB family.

The protein resides in the cytoplasm. The catalysed reaction is octanoyl-[ACP] + L-lysyl-[protein] = N(6)-octanoyl-L-lysyl-[protein] + holo-[ACP] + H(+). It participates in protein modification; protein lipoylation via endogenous pathway; protein N(6)-(lipoyl)lysine from octanoyl-[acyl-carrier-protein]: step 1/2. Catalyzes the transfer of endogenously produced octanoic acid from octanoyl-acyl-carrier-protein onto the lipoyl domains of lipoate-dependent enzymes. Lipoyl-ACP can also act as a substrate although octanoyl-ACP is likely to be the physiological substrate. This is Octanoyltransferase from Mycobacterium bovis (strain BCG / Tokyo 172 / ATCC 35737 / TMC 1019).